The chain runs to 417 residues: Serine hydroxymethyltransferase (417 aa).

Residues leucine 121 and 125-127 (GHL) each bind (6S)-5,6,7,8-tetrahydrofolate. An N6-(pyridoxal phosphate)lysine modification is found at lysine 229. Residue 355-357 (SPF) coordinates (6S)-5,6,7,8-tetrahydrofolate.

It belongs to the SHMT family. Homodimer. Pyridoxal 5'-phosphate is required as a cofactor.

It is found in the cytoplasm. The catalysed reaction is (6R)-5,10-methylene-5,6,7,8-tetrahydrofolate + glycine + H2O = (6S)-5,6,7,8-tetrahydrofolate + L-serine. Its pathway is one-carbon metabolism; tetrahydrofolate interconversion. It functions in the pathway amino-acid biosynthesis; glycine biosynthesis; glycine from L-serine: step 1/1. In terms of biological role, catalyzes the reversible interconversion of serine and glycine with tetrahydrofolate (THF) serving as the one-carbon carrier. This reaction serves as the major source of one-carbon groups required for the biosynthesis of purines, thymidylate, methionine, and other important biomolecules. Also exhibits THF-independent aldolase activity toward beta-hydroxyamino acids, producing glycine and aldehydes, via a retro-aldol mechanism. The sequence is that of Serine hydroxymethyltransferase from Photorhabdus laumondii subsp. laumondii (strain DSM 15139 / CIP 105565 / TT01) (Photorhabdus luminescens subsp. laumondii).